Here is a 100-residue protein sequence, read N- to C-terminus: Mitochondrial zinc maintenance protein 1, mitochondrial (100 aa).

This sequence belongs to the complex I LYR family. MZM1 subfamily. In terms of assembly, interacts with RIP1.

The protein resides in the mitochondrion matrix. In terms of biological role, assembly factor required for Rieske Fe-S protein RIP1 incorporation into the cytochrome b-c1 (CIII) complex. Functions as a chaperone, binding to this subunit within the mitochondrial matrix and stabilizing it prior to its translocation and insertion into the late CIII dimeric intermediate within the mitochondrial inner membrane. Modulates the mitochondrial matrix zinc pool. The chain is Mitochondrial zinc maintenance protein 1, mitochondrial (new18) from Schizosaccharomyces pombe (strain 972 / ATCC 24843) (Fission yeast).